Here is a 1250-residue protein sequence, read N- to C-terminus: Minor capsid protein M1249L (1250 aa).

The protein belongs to the asfivirus M1249L family. In terms of assembly, interacts with the minor capsid protein p17 and with the hexon capsid protein p72 capsomers; these interactions form a rigid zipper structure that stabilizes the capsomers. Interacts with host IRF3.

The protein resides in the virion. The protein localises to the host cytoplasm. Functionally, together with the penton and the other minor capsid proteins (p17, p49), forms a complicated network immediately below the outer capsid shell, stabilizing the whole capsid. In addition, blocks IFN-beta transactivation mediated by the cGAS-STING pathway and regulates the transcriptional activity of IFN-beta. Mechanistically, suppresses the phosphorylation of host key adapter protein TBK1 and degrades host IRF3 in the cytoplasm. This Ornithodoros (relapsing fever ticks) protein is Minor capsid protein M1249L.